A 238-amino-acid polypeptide reads, in one-letter code: Transcription factor PCL1 (238 aa).

Low complexity predominate over residues arginine 71–glycine 90. The tract at residues arginine 71–alanine 119 is disordered. The span at serine 100–glycine 109 shows a compositional bias: gly residues. The myb-like GARP DNA-binding region spans serine 115 to lysine 174.

The protein localises to the nucleus. Its function is as follows. Transcription factor that is essential for the generation of the circadian clock oscillation. Binds to specific sites on CCA1 promoter leading to CCA1 activation. This chain is Transcription factor PCL1 (PCL1), found in Oryza sativa subsp. japonica (Rice).